We begin with the raw amino-acid sequence, 491 residues long: MARAIMLQGTGSDVGKTVLVAGLCRAAKKRGLKVRPFKPQNMSNNAAVADIPGDNNHGGGEIGRAQWLQAIACGVAPSVHMNPVLLKPQSDVGAQVIVQGKVFGEARARDYQALKGRLMDAVLDSWAKVGEGADLVIVEGAGSPAEINLRSRDIANMGFATRADVPVVLVGDIDRGGVIASVAGTHLILPEEDRRMIVGYLINKFRGDVSLFDDGLKAIEKFTGWRCFGVVPWLKAAARLPSEDSVVLERLASGEARALKVAVPVLGRIANFDDLDPLKAEPQVEVVFVPPGKPLPSDAGLVVIPGSKSTIGDLIRFRENGWDRDLATHRKRGGHVVGICGGFQMLGRRVRDPDGIEGSVTEAEGLGLLDIETMMEPEKTVRNVSARSVQFDLPLEGYEIHLGRTTGPDTMRPSAIINGVADGAISADGKVIGTYMHGLFGADAFRGKFLESLGIKGGGIDYRVEVERALDDVAAELEGHLDCDALFGLAR.

One can recognise a GATase cobBQ-type domain in the interval 258–445 (ALKVAVPVLG…MHGLFGADAF (188 aa)). Cysteine 340 functions as the Nucleophile in the catalytic mechanism. Histidine 437 is a catalytic residue.

Belongs to the CobB/CobQ family. CobQ subfamily.

Its pathway is cofactor biosynthesis; adenosylcobalamin biosynthesis. Its function is as follows. Catalyzes amidations at positions B, D, E, and G on adenosylcobyrinic A,C-diamide. NH(2) groups are provided by glutamine, and one molecule of ATP is hydrogenolyzed for each amidation. The chain is Cobyric acid synthase from Mesorhizobium japonicum (strain LMG 29417 / CECT 9101 / MAFF 303099) (Mesorhizobium loti (strain MAFF 303099)).